A 137-amino-acid chain; its full sequence is Large-conductance mechanosensitive channel (137 aa).

A run of 2 helical transmembrane segments spans residues 10-30 (FAMR…AAFG) and 76-96 (GVFI…FVAI).

It belongs to the MscL family. In terms of assembly, homopentamer.

It localises to the cell inner membrane. Functionally, channel that opens in response to stretch forces in the membrane lipid bilayer. May participate in the regulation of osmotic pressure changes within the cell. The polypeptide is Large-conductance mechanosensitive channel (Salmonella typhimurium (strain LT2 / SGSC1412 / ATCC 700720)).